The primary structure comprises 380 residues: Tetratricopeptide repeat protein 19, mitochondrial (380 aa).

A mitochondrion-targeting transit peptide spans 1 to 70; the sequence is MFRLLSWSLG…AALAWFSRPA (70 aa). TPR repeat units lie at residues 136-169, 179-212, 237-270, 279-312, and 318-351; these read TYTY…LLGG, IEIS…LEEK, GMCL…SEEI, IVLM…ARQI, and HMVL…AKLK.

It belongs to the TTC19 family. Binds to the mature mitochondrial complex III dimer, after the incorporation of the Rieske protein UQCRFS1. Interacts with UQCRC1 and UQCRFS1. Interacts with ZFYVE26 and CHMP4B. Post-translationally, proteolytically cleaved by PARL.

It is found in the mitochondrion inner membrane. In terms of biological role, required for the preservation of the structural and functional integrity of mitochondrial respiratory complex III by allowing the physiological turnover of the Rieske protein UQCRFS1. Involved in the clearance of UQCRFS1 N-terminal fragments, which are produced upon incorporation of UQCRFS1 into the complex III and whose presence is detrimental for its catalytic activity. This Homo sapiens (Human) protein is Tetratricopeptide repeat protein 19, mitochondrial (TTC19).